The primary structure comprises 310 residues: Ribosomal RNA small subunit methyltransferase H (310 aa).

S-adenosyl-L-methionine-binding positions include 33-35, Asp-53, Phe-79, Asp-100, and Gln-107; that span reads AGH.

Belongs to the methyltransferase superfamily. RsmH family.

The protein resides in the cytoplasm. It catalyses the reaction cytidine(1402) in 16S rRNA + S-adenosyl-L-methionine = N(4)-methylcytidine(1402) in 16S rRNA + S-adenosyl-L-homocysteine + H(+). In terms of biological role, specifically methylates the N4 position of cytidine in position 1402 (C1402) of 16S rRNA. The sequence is that of Ribosomal RNA small subunit methyltransferase H from Desulfitobacterium hafniense (strain DSM 10664 / DCB-2).